The chain runs to 227 residues: ATP phosphoribosyltransferase (227 aa).

Belongs to the ATP phosphoribosyltransferase family. Short subfamily. In terms of assembly, heteromultimer composed of HisG and HisZ subunits.

It is found in the cytoplasm. The enzyme catalyses 1-(5-phospho-beta-D-ribosyl)-ATP + diphosphate = 5-phospho-alpha-D-ribose 1-diphosphate + ATP. It functions in the pathway amino-acid biosynthesis; L-histidine biosynthesis; L-histidine from 5-phospho-alpha-D-ribose 1-diphosphate: step 1/9. Catalyzes the condensation of ATP and 5-phosphoribose 1-diphosphate to form N'-(5'-phosphoribosyl)-ATP (PR-ATP). Has a crucial role in the pathway because the rate of histidine biosynthesis seems to be controlled primarily by regulation of HisG enzymatic activity. In Bordetella avium (strain 197N), this protein is ATP phosphoribosyltransferase.